The following is a 369-amino-acid chain: Flagellar P-ring protein (369 aa).

An N-terminal signal peptide occupies residues 1–23; it reads MRIASFFTVLLTLLTLNITPASA.

The protein belongs to the FlgI family. As to quaternary structure, the basal body constitutes a major portion of the flagellar organelle and consists of four rings (L,P,S, and M) mounted on a central rod.

It is found in the periplasm. It localises to the bacterial flagellum basal body. Assembles around the rod to form the L-ring and probably protects the motor/basal body from shearing forces during rotation. This chain is Flagellar P-ring protein, found in Pectobacterium atrosepticum (strain SCRI 1043 / ATCC BAA-672) (Erwinia carotovora subsp. atroseptica).